We begin with the raw amino-acid sequence, 574 residues long: Squalene monooxygenase (574 aa).

The Cytoplasmic portion of the chain corresponds to 1–20 (MWTFLGIATFTYFYKKFGDF). Residues 1–100 (MWTFLGIATF…EQLEARRRRK (100 aa)) form an interaction with MARCHF6 region. An intramembrane segment occupies 21-41 (ITLANREVLLCVLVFLSLGLV). The Cytoplasmic segment spans residues 42–574 (LSYRCRHRNG…IYSEMKYMVH (533 aa)). The tract at residues 62-73 (QFALFSDILSGL) is required for degradation in response to high membrane cholesterol levels. A sufficient for enzyme activity region spans residues 118 to 574 (TSSQNDPEVI…IYSEMKYMVH (457 aa)). Residues 133–134 (VL), 153–154 (ER), arginine 161, phenylalanine 166, arginine 234, valine 250, aspartate 408, and methionine 421 contribute to the FAD site. Residues 516–574 (PLVLIGHFFAVAIYAVYFCFKSEPWITKPRALLSSGAVLYKACSVIFPLIYSEMKYMVH) form a hydrophobic; mediates interaction with membranes region.

It belongs to the squalene monooxygenase family. Interacts (via N-terminal domain) with MARCHF6. Interacts with SMIM22; this interaction modulates lipid droplet formation. FAD serves as cofactor. Post-translationally, ubiquitinated by MARCHF6 in response to high cholesterol levels in intracellular membranes, leading to proteasomal degradation. As to expression, detected in liver (at protein level).

The protein localises to the microsome membrane. It localises to the endoplasmic reticulum membrane. It carries out the reaction squalene + reduced [NADPH--hemoprotein reductase] + O2 = (S)-2,3-epoxysqualene + oxidized [NADPH--hemoprotein reductase] + H2O + H(+). It functions in the pathway terpene metabolism; lanosterol biosynthesis; lanosterol from farnesyl diphosphate: step 2/3. With respect to regulation, inhibited by NB-598 ((E)N-ethyl-N-(6,6-dimethyl-2-hepten-4-ynyl)-3-[(3,3'-bi-thiophen-5-yl)methoxy]benzene-methanamine). Contrary to fungal enzymes, the mammalian enzyme is only slightly inhibited by terbinafine. Inhibited by tellurite, tellurium dioxide, selenite, and selenium dioxide. Functionally, catalyzes the stereospecific oxidation of squalene to (S)-2,3-epoxysqualene, and is considered to be a rate-limiting enzyme in steroid biosynthesis. This is Squalene monooxygenase (SQLE) from Homo sapiens (Human).